Reading from the N-terminus, the 837-residue chain is Endo-1,4-beta-xylanase Z (837 aa).

The first 28 residues, 1–28 (MSRKLFSVLLVGLMLMTSLLVTISSTSA), serve as a signal peptide directing secretion. The CBM6 domain maps to 299–420 (TRIEAEDYDG…PVNIDWFTFG (122 aa)). Residues 424–492 (SSTGLGDLNG…ILRIITEFPG (69 aa)) form the Dockerin domain. The region spanning 512–833 (TISGNALRDY…KPAYNAIKEA (322 aa)) is the GH10 domain. Residue E645 is the Proton donor of the active site. The active-site Nucleophile is E754. An intrachain disulfide couples C783 to C789.

This sequence belongs to the glycosyl hydrolase 10 (cellulase F) family.

It carries out the reaction Endohydrolysis of (1-&gt;4)-beta-D-xylosidic linkages in xylans.. In Acetivibrio thermocellus (strain ATCC 27405 / DSM 1237 / JCM 9322 / NBRC 103400 / NCIMB 10682 / NRRL B-4536 / VPI 7372) (Clostridium thermocellum), this protein is Endo-1,4-beta-xylanase Z (xynZ).